Reading from the N-terminus, the 323-residue chain is Arginase-1 (323 aa).

Residues 1-27 form a disordered region; the sequence is MSSKPKSLEIIGAPFSKGQPRGGVEKG. A Phosphoserine modification is found at Ser7. Lys17 is subject to N6-succinyllysine. Residues Ser62 and Ser72 each carry the phosphoserine modification. Lys75 is subject to N6-succinyllysine. Residues His101, Asp124, His126, and Asp128 each coordinate Mn(2+). Residues 126-130 and 137-139 each bind substrate; these read HTDIN and SGN. Ser163 is modified (phosphoserine). Asp183 provides a ligand contact to substrate. Ser217 is modified (phosphoserine). Mn(2+)-binding residues include Asp232 and Asp234. Positions 246 and 277 each coordinate substrate. Residue Thr281 is modified to Phosphothreonine.

This sequence belongs to the arginase family. Homotrimer. Interacts with CMTM6. Mn(2+) serves as cofactor. Expressed in macrophages. Expressed in precursor and mature group 2 innate lymphoid cells (ILC2s). Expressed in lung tumor-associated myeloid cells. Expressed in lung tumor-infiltrating dendritic cells.

Its subcellular location is the cytoplasm. It is found in the cytoplasmic granule. The catalysed reaction is L-arginine + H2O = urea + L-ornithine. It functions in the pathway nitrogen metabolism; urea cycle; L-ornithine and urea from L-arginine: step 1/1. In terms of biological role, key element of the urea cycle converting L-arginine to urea and L-ornithine, which is further metabolized into metabolites proline and polyamides that drive collagen synthesis and bioenergetic pathways critical for cell proliferation, respectively; the urea cycle takes place primarily in the liver and, to a lesser extent, in the kidneys. Functionally, functions in L-arginine homeostasis in nonhepatic tissues characterized by the competition between nitric oxide synthase (NOS) and arginase for the available intracellular substrate arginine. Arginine metabolism is a critical regulator of innate and adaptive immune responses. Involved in an antimicrobial effector pathway in polymorphonuclear granulocytes (PMN). Upon PMN cell death is liberated from the phagolysosome and depletes arginine in the microenvironment leading to suppressed T cell and natural killer (NK) cell proliferation and cytokine secretion. In group 2 innate lymphoid cells (ILC2s) promotes acute type 2 inflammation in the lung and is involved in optimal ILC2 proliferation but not survival. Plays a role in the immune response of alternatively activated or M2 macrophages in processes such as wound healing and tissue regeneration, immune defense against multicellular pathogens and parasites, and immune suppression and allergic inflammation; the regulatory outcome seems to be organ specific. In tumor-infiltrating dendritic cells (DCs) and myeloid-derived suppressor cells (MDSCs) plays a role in suppression of T cell-mediated antitumor immunity. The chain is Arginase-1 (Arg1) from Mus musculus (Mouse).